A 149-amino-acid polypeptide reads, in one-letter code: Arginine repressor (149 aa).

Belongs to the ArgR family.

The protein localises to the cytoplasm. The protein operates within amino-acid biosynthesis; L-arginine biosynthesis [regulation]. Its function is as follows. Regulates arginine biosynthesis genes. This Chlorobaculum tepidum (strain ATCC 49652 / DSM 12025 / NBRC 103806 / TLS) (Chlorobium tepidum) protein is Arginine repressor.